A 638-amino-acid polypeptide reads, in one-letter code: 1-deoxy-D-xylulose-5-phosphate synthase (638 aa).

Thiamine diphosphate contacts are provided by residues His79 and 120–122; that span reads AHS. Residue Asp151 coordinates Mg(2+). Thiamine diphosphate contacts are provided by residues 152 to 153, Asn180, Tyr289, and Glu371; that span reads GA. Asn180 contributes to the Mg(2+) binding site.

Belongs to the transketolase family. DXPS subfamily. As to quaternary structure, homodimer. Requires Mg(2+) as cofactor. Thiamine diphosphate serves as cofactor.

The catalysed reaction is D-glyceraldehyde 3-phosphate + pyruvate + H(+) = 1-deoxy-D-xylulose 5-phosphate + CO2. It functions in the pathway metabolic intermediate biosynthesis; 1-deoxy-D-xylulose 5-phosphate biosynthesis; 1-deoxy-D-xylulose 5-phosphate from D-glyceraldehyde 3-phosphate and pyruvate: step 1/1. Functionally, catalyzes the acyloin condensation reaction between C atoms 2 and 3 of pyruvate and glyceraldehyde 3-phosphate to yield 1-deoxy-D-xylulose-5-phosphate (DXP). This is 1-deoxy-D-xylulose-5-phosphate synthase from Rhizobium etli (strain ATCC 51251 / DSM 11541 / JCM 21823 / NBRC 15573 / CFN 42).